A 122-amino-acid chain; its full sequence is Large ribosomal subunit protein uL14 (122 aa).

Belongs to the universal ribosomal protein uL14 family. Part of the 50S ribosomal subunit. Forms a cluster with proteins L3 and L19. In the 70S ribosome, L14 and L19 interact and together make contacts with the 16S rRNA in bridges B5 and B8.

Binds to 23S rRNA. Forms part of two intersubunit bridges in the 70S ribosome. The polypeptide is Large ribosomal subunit protein uL14 (Staphylococcus epidermidis (strain ATCC 35984 / DSM 28319 / BCRC 17069 / CCUG 31568 / BM 3577 / RP62A)).